We begin with the raw amino-acid sequence, 96 residues long: CLAVATA3/ESR (CLE)-related protein 43 (96 aa).

Positions 1–28 (MGCRDILLTFSVALLLISLFQIWLFREG) are cleaved as a signal peptide. Residues 71–96 (FGLNNTNSRFEDSNRRIPSSPDRLHN) are disordered. Residue Asn74 is glycosylated (N-linked (GlcNAc...) asparagine). Hydroxyproline is present on residues Pro88 and Pro91. An O-linked (Ara...) hydroxyproline glycan is attached at Pro91.

The protein belongs to the CLV3/ESR signal peptide family. Post-translationally, the O-glycosylation (arabinosylation) of the hydroxyproline Pro-91 enhances binding affinity of the CLE43p peptide for its receptor. As to expression, expressed at low levels in seedlings.

The protein localises to the secreted. It is found in the extracellular space. Its function is as follows. Extracellular signal peptide that regulates cell fate. Promotes pollen tube growth prolongation in a SKM1 and SKM2-dependent manner, especially under relatively high temperature (at 30 degrees Celsius), thus conferring tolerance against high temperature probably through the maintenance of mitochondrial activity. The polypeptide is CLAVATA3/ESR (CLE)-related protein 43 (Arabidopsis thaliana (Mouse-ear cress)).